The primary structure comprises 338 residues: Ribosomal RNA small subunit methyltransferase H (338 aa).

Residues 46–48, D63, F90, D106, and Q113 contribute to the S-adenosyl-L-methionine site; that span reads GGY.

This sequence belongs to the methyltransferase superfamily. RsmH family.

It localises to the cytoplasm. The enzyme catalyses cytidine(1402) in 16S rRNA + S-adenosyl-L-methionine = N(4)-methylcytidine(1402) in 16S rRNA + S-adenosyl-L-homocysteine + H(+). In terms of biological role, specifically methylates the N4 position of cytidine in position 1402 (C1402) of 16S rRNA. The protein is Ribosomal RNA small subunit methyltransferase H of Mesorhizobium japonicum (strain LMG 29417 / CECT 9101 / MAFF 303099) (Mesorhizobium loti (strain MAFF 303099)).